Reading from the N-terminus, the 284-residue chain is D-tagatose-1,6-bisphosphate aldolase subunit GatY (284 aa).

Aspartate 82 acts as the Proton donor in catalysis. The Zn(2+) site is built by histidine 83 and histidine 180. Glycine 181 is a dihydroxyacetone phosphate binding site. A Zn(2+)-binding site is contributed by histidine 208. Dihydroxyacetone phosphate is bound by residues 209-211 and 230-233; these read GAS and NVAT.

Belongs to the class II fructose-bisphosphate aldolase family. TagBP aldolase GatY subfamily. Forms a complex with GatZ. It depends on Zn(2+) as a cofactor.

It catalyses the reaction D-tagatofuranose 1,6-bisphosphate = D-glyceraldehyde 3-phosphate + dihydroxyacetone phosphate. Its pathway is carbohydrate metabolism; D-tagatose 6-phosphate degradation; D-glyceraldehyde 3-phosphate and glycerone phosphate from D-tagatose 6-phosphate: step 2/2. Functionally, catalytic subunit of the tagatose-1,6-bisphosphate aldolase GatYZ, which catalyzes the reversible aldol condensation of dihydroxyacetone phosphate (DHAP or glycerone-phosphate) with glyceraldehyde 3-phosphate (G3P) to produce tagatose 1,6-bisphosphate (TBP). Requires GatZ subunit for full activity and stability. Is involved in the catabolism of galactitol. The sequence is that of D-tagatose-1,6-bisphosphate aldolase subunit GatY from Escherichia coli O8 (strain IAI1).